Reading from the N-terminus, the 103-residue chain is Large ribosomal subunit protein bL21 (103 aa).

It belongs to the bacterial ribosomal protein bL21 family. As to quaternary structure, part of the 50S ribosomal subunit. Contacts protein L20.

In terms of biological role, this protein binds to 23S rRNA in the presence of protein L20. In Lactobacillus johnsonii (strain CNCM I-12250 / La1 / NCC 533), this protein is Large ribosomal subunit protein bL21.